Consider the following 79-residue polypeptide: MQSILTQETIIIALIYLSLSVLYLLVIPAVIYYYLNTRWYVASSWERGFMYFLMSFFFPGMLLLSPFLNFRPQRRTLKA.

The next 2 helical transmembrane spans lie at 10–30 (IIIA…IPAV) and 48–68 (GFMY…SPFL).

This sequence belongs to the complex I NdhL subunit family. As to quaternary structure, NDH-1 can be composed of about 15 different subunits; different subcomplexes with different compositions have been identified which probably have different functions.

It localises to the cellular thylakoid membrane. It carries out the reaction a plastoquinone + NADH + (n+1) H(+)(in) = a plastoquinol + NAD(+) + n H(+)(out). The catalysed reaction is a plastoquinone + NADPH + (n+1) H(+)(in) = a plastoquinol + NADP(+) + n H(+)(out). Its function is as follows. NDH-1 shuttles electrons from an unknown electron donor, via FMN and iron-sulfur (Fe-S) centers, to quinones in the respiratory and/or the photosynthetic chain. The immediate electron acceptor for the enzyme in this species is believed to be plastoquinone. Couples the redox reaction to proton translocation, and thus conserves the redox energy in a proton gradient. Cyanobacterial NDH-1 also plays a role in inorganic carbon-concentration. This Microcystis aeruginosa (strain NIES-843 / IAM M-2473) protein is NAD(P)H-quinone oxidoreductase subunit L.